The chain runs to 796 residues: uncharacterized protein (796 aa).

It is found in the mitochondrion. This is an uncharacterized protein from Dictyostelium discoideum (Social amoeba).